The primary structure comprises 144 residues: Transcription antitermination protein NusB (144 aa).

The protein belongs to the NusB family.

Its function is as follows. Involved in transcription antitermination. Required for transcription of ribosomal RNA (rRNA) genes. Binds specifically to the boxA antiterminator sequence of the ribosomal RNA (rrn) operons. The chain is Transcription antitermination protein NusB from Leifsonia xyli subsp. xyli (strain CTCB07).